We begin with the raw amino-acid sequence, 186 residues long: MEVGVLSMRYAKAMIEYAQEKGVEDRLYNEFFTLSHSFRVQPGLREVLDNPVVSVKDKLALICTAADGNGESSREFVRFITLVLRNRREGYLQFISLMYLDLYRKLKHIGVGKLITAVPVDKETENRIRSAAAHILHAQMELDTVIDPSIEGGFIFDINDYRLDASIATQLKRVKQQFIDKNRRIV.

The protein belongs to the ATPase delta chain family. As to quaternary structure, F-type ATPases have 2 components, F(1) - the catalytic core - and F(0) - the membrane proton channel. F(1) has five subunits: alpha(3), beta(3), gamma(1), delta(1), epsilon(1). F(0) has three main subunits: a(1), b(2) and c(10-14). The alpha and beta chains form an alternating ring which encloses part of the gamma chain. F(1) is attached to F(0) by a central stalk formed by the gamma and epsilon chains, while a peripheral stalk is formed by the delta and b chains.

Its subcellular location is the cell inner membrane. In terms of biological role, f(1)F(0) ATP synthase produces ATP from ADP in the presence of a proton or sodium gradient. F-type ATPases consist of two structural domains, F(1) containing the extramembraneous catalytic core and F(0) containing the membrane proton channel, linked together by a central stalk and a peripheral stalk. During catalysis, ATP synthesis in the catalytic domain of F(1) is coupled via a rotary mechanism of the central stalk subunits to proton translocation. Functionally, this protein is part of the stalk that links CF(0) to CF(1). It either transmits conformational changes from CF(0) to CF(1) or is implicated in proton conduction. The protein is ATP synthase subunit delta of Bacteroides thetaiotaomicron (strain ATCC 29148 / DSM 2079 / JCM 5827 / CCUG 10774 / NCTC 10582 / VPI-5482 / E50).